We begin with the raw amino-acid sequence, 422 residues long: Testin (422 aa).

A PET domain is found at methionine 92–glutamate 199. Residues glutamine 135 to histidine 165 form a disordered region. Basic and acidic residues predominate over residues proline 155–histidine 165. LIM zinc-binding domains follow at residues tyrosine 234–proline 299, arginine 300–valine 359, and serine 360–serine 422.

It belongs to the prickle / espinas / testin family.

The protein localises to the cytoplasm. Its subcellular location is the cell cortex. It localises to the cell junction. It is found in the focal adhesion. In terms of biological role, scaffold protein that may play a role in cell adhesion, cell spreading and in the reorganization of the actin cytoskeleton. May inhibit cell growth. Regulates cranial neural crest migration. Acts together with prickle1 to control axial elongation. The sequence is that of Testin from Xenopus tropicalis (Western clawed frog).